The chain runs to 76 residues: Kappa-actitoxin-Avd4l (76 aa).

The signal sequence occupies residues 1 to 19 (MNKALFLCLVVLCAAVVFA). A propeptide spanning residues 20–31 (AEDLQKAKHAPF) is cleaved from the precursor. Cystine bridges form between cysteine 37–cysteine 72, cysteine 39–cysteine 65, and cysteine 55–cysteine 73.

This sequence belongs to the sea anemone type 3 (BDS) potassium channel toxin family. In terms of tissue distribution, weakly expressed in the ectodermal tissue from the distal and proximal tentacles, body wall, and oral disk.

The protein resides in the secreted. It is found in the nematocyst. Its function is as follows. Blocks Kv3 voltage-gated potassium channels. Reduces blood pressure. The protein is Kappa-actitoxin-Avd4l of Anemonia viridis (Snakelocks anemone).